The chain runs to 157 residues: Crossover junction endodeoxyribonuclease RuvC (157 aa).

Catalysis depends on residues Asp-7, Glu-67, and Asp-140. Residues Asp-7, Glu-67, and Asp-140 each contribute to the Mg(2+) site.

This sequence belongs to the RuvC family. In terms of assembly, homodimer which binds Holliday junction (HJ) DNA. The HJ becomes 2-fold symmetrical on binding to RuvC with unstacked arms; it has a different conformation from HJ DNA in complex with RuvA. In the full resolvosome a probable DNA-RuvA(4)-RuvB(12)-RuvC(2) complex forms which resolves the HJ. Mg(2+) serves as cofactor.

The protein resides in the cytoplasm. The catalysed reaction is Endonucleolytic cleavage at a junction such as a reciprocal single-stranded crossover between two homologous DNA duplexes (Holliday junction).. Functionally, the RuvA-RuvB-RuvC complex processes Holliday junction (HJ) DNA during genetic recombination and DNA repair. Endonuclease that resolves HJ intermediates. Cleaves cruciform DNA by making single-stranded nicks across the HJ at symmetrical positions within the homologous arms, yielding a 5'-phosphate and a 3'-hydroxyl group; requires a central core of homology in the junction. The consensus cleavage sequence is 5'-(A/T)TT(C/G)-3'. Cleavage occurs on the 3'-side of the TT dinucleotide at the point of strand exchange. HJ branch migration catalyzed by RuvA-RuvB allows RuvC to scan DNA until it finds its consensus sequence, where it cleaves and resolves the cruciform DNA. The polypeptide is Crossover junction endodeoxyribonuclease RuvC (Thermosipho melanesiensis (strain DSM 12029 / CIP 104789 / BI429)).